A 130-amino-acid polypeptide reads, in one-letter code: Albumin-1 E (130 aa).

Residues 1–26 (MASVKLASLIVLFATLGMFLTKNVGA) form the signal peptide. 3 disulfides stabilise this stretch: Cys29-Cys46, Cys33-Cys48, and Cys41-Cys58. 2 propeptides span residues 64 to 69 (VFLKGN) and 123 to 130 (LLKSVSTA).

In terms of processing, the C-terminal glycine may be removed from PA1b.

Its function is as follows. PA1b binds to basic 7S globulin (BG) and stimulates its phosphorylation activity. Involved in the signal transduction system to regulate the growth and differentiation as a hormone peptide. Toxic to various insects through binding to a high affinity binding site in the insect gut. The chain is Albumin-1 E from Pisum sativum (Garden pea).